A 389-amino-acid chain; its full sequence is S-adenosylmethionine synthase (389 aa).

Residue His-19 participates in ATP binding. Asp-21 provides a ligand contact to Mg(2+). K(+) is bound at residue Glu-47. 2 residues coordinate L-methionine: Glu-60 and Gln-103. The interval 103–113 (QSGDIAQGVDR) is flexible loop. Residues 168 to 170 (DGK), 234 to 235 (RF), Asp-243, 249 to 250 (RK), Ala-266, and Lys-270 contribute to the ATP site. Asp-243 provides a ligand contact to L-methionine. Residue Lys-274 participates in L-methionine binding.

It belongs to the AdoMet synthase family. As to quaternary structure, homotetramer; dimer of dimers. Requires Mg(2+) as cofactor. It depends on K(+) as a cofactor.

Its subcellular location is the cytoplasm. The catalysed reaction is L-methionine + ATP + H2O = S-adenosyl-L-methionine + phosphate + diphosphate. Its pathway is amino-acid biosynthesis; S-adenosyl-L-methionine biosynthesis; S-adenosyl-L-methionine from L-methionine: step 1/1. Its function is as follows. Catalyzes the formation of S-adenosylmethionine (AdoMet) from methionine and ATP. The overall synthetic reaction is composed of two sequential steps, AdoMet formation and the subsequent tripolyphosphate hydrolysis which occurs prior to release of AdoMet from the enzyme. The chain is S-adenosylmethionine synthase from Nitratidesulfovibrio vulgaris (strain DSM 19637 / Miyazaki F) (Desulfovibrio vulgaris).